The following is a 288-amino-acid chain: Phenazine biosynthesis-like domain-containing protein (288 aa).

Glu-46 is a catalytic residue.

This sequence belongs to the PhzF family. In terms of assembly, interacts with UNRIP/MAWD.

The chain is Phenazine biosynthesis-like domain-containing protein (PBLD) from Bos taurus (Bovine).